Reading from the N-terminus, the 64-residue chain is uncharacterized protein (64 aa).

A disordered region spans residues 1 to 64 (MMITRGWEGW…LDPAISRSSS (64 aa)). Over residues 16-28 (RGAGTGTGLGGPG) the composition is skewed to gly residues.

This is an uncharacterized protein from Homo sapiens (Human).